The chain runs to 290 residues: Putative beta-lactamase HcpC (290 aa).

The N-terminal stretch at 1–25 (MLENVKKSFFRVLCLGALCLGGLMA) is a signal peptide. TPR repeat units lie at residues 29–62 (PKEL…KENS), 64–98 (CFNL…NYSN), 100–133 (CHLL…LKYA), 134–170 (EGCA…NDGD), 172–205 (CTIL…LKDS), 206–242 (PGCF…ENGG), and 244–278 (CFNL…GAKG). Disulfide bonds link Cys-56–Cys-64, Cys-92–Cys-100, Cys-128–Cys-136, Cys-164–Cys-172, Cys-200–Cys-208, Cys-236–Cys-244, and Cys-272–Cys-280.

Belongs to the hcp beta-lactamase family.

The protein localises to the secreted. The enzyme catalyses a beta-lactam + H2O = a substituted beta-amino acid. In terms of biological role, may hydrolyze 6-aminopenicillinic acid and 7-aminocephalosporanic acid (ACA) derivatives. This chain is Putative beta-lactamase HcpC (hcpC), found in Helicobacter pylori (strain ATCC 700392 / 26695) (Campylobacter pylori).